The primary structure comprises 870 residues: Histidine biosynthesis trifunctional protein (870 aa).

The interval 1-285 (METTLPLPFL…KFVVKQKGRF (285 aa)) is phosphoribosyl-AMP cyclohydrolase. Residues 286 to 367 (CHLDQSGCFG…FYFALTRAVA (82 aa)) are phosphoribosyl-ATP pyrophosphohydrolase. The interval 368 to 870 (AGVTLADIER…IRLEHMSKSN (503 aa)) is histidinol dehydrogenase. The Zn(2+) site is built by glutamine 693 and histidine 696. Catalysis depends on residues glutamate 762 and histidine 763. Residues aspartate 796 and histidine 855 each contribute to the Zn(2+) site.

In the C-terminal section; belongs to the histidinol dehydrogenase family. Zn(2+) serves as cofactor.

It catalyses the reaction 1-(5-phospho-beta-D-ribosyl)-5'-AMP + H2O = 1-(5-phospho-beta-D-ribosyl)-5-[(5-phospho-beta-D-ribosylamino)methylideneamino]imidazole-4-carboxamide. The enzyme catalyses 1-(5-phospho-beta-D-ribosyl)-ATP + H2O = 1-(5-phospho-beta-D-ribosyl)-5'-AMP + diphosphate + H(+). It carries out the reaction L-histidinol + 2 NAD(+) + H2O = L-histidine + 2 NADH + 3 H(+). It functions in the pathway amino-acid biosynthesis; L-histidine biosynthesis; L-histidine from 5-phospho-alpha-D-ribose 1-diphosphate: step 2/9. The protein operates within amino-acid biosynthesis; L-histidine biosynthesis; L-histidine from 5-phospho-alpha-D-ribose 1-diphosphate: step 3/9. Its pathway is amino-acid biosynthesis; L-histidine biosynthesis; L-histidine from 5-phospho-alpha-D-ribose 1-diphosphate: step 9/9. The polypeptide is Histidine biosynthesis trifunctional protein (his-3) (Neurospora crassa (strain ATCC 24698 / 74-OR23-1A / CBS 708.71 / DSM 1257 / FGSC 987)).